The chain runs to 429 residues: Ribosomal RNA small subunit methyltransferase B (429 aa).

S-adenosyl-L-methionine is bound by residues 254–260 (CAAPGGK), Asp277, Asp303, and Asp322. Cys375 (nucleophile) is an active-site residue.

It belongs to the class I-like SAM-binding methyltransferase superfamily. RsmB/NOP family.

It is found in the cytoplasm. It catalyses the reaction cytidine(967) in 16S rRNA + S-adenosyl-L-methionine = 5-methylcytidine(967) in 16S rRNA + S-adenosyl-L-homocysteine + H(+). Functionally, specifically methylates the cytosine at position 967 (m5C967) of 16S rRNA. This Escherichia coli (strain UTI89 / UPEC) protein is Ribosomal RNA small subunit methyltransferase B.